Consider the following 154-residue polypeptide: CASP-like protein 5B2 (154 aa).

Topologically, residues 1-10 are cytoplasmic; it reads MKKLLGGPGT. Residues 11–31 form a helical membrane-spanning segment; sequence VCGLLLRIGQCASAAASIGVM. At 32 to 42 the chain is on the extracellular side; sequence VSAKEFSVHTA. A helical transmembrane segment spans residues 43-63; the sequence is FCYLIASMGLQLLWSFGLACL. Over 64 to 77 the chain is Cytoplasmic; it reads DVYALRGKKDLQNP. A helical membrane pass occupies residues 78 to 98; that stretch reads ILVSLFVVGDWVTAMLSLAAA. Over 99-129 the chain is Extracellular; it reads CSSAGVVVLYEKDIKYCNTQSQYPCLRYEVA. Residues 130-150 traverse the membrane as a helical segment; that stretch reads VALSFVTWIQIAVSSHVTFWI. Residues 151 to 154 are Cytoplasmic-facing; it reads LASV.

It belongs to the Casparian strip membrane proteins (CASP) family. As to quaternary structure, homodimer and heterodimers. Expressed in the stele of the root.

The protein resides in the cell membrane. This is CASP-like protein 5B2 from Arabidopsis thaliana (Mouse-ear cress).